The primary structure comprises 520 residues: Glycosyl hydrolase family 109 protein 5 (520 aa).

The N-terminal stretch at 1 to 27 is a signal peptide; that stretch reads MRTFKSLMISLCMGTTLCMCLPQTTTA. Residues 77–78, aspartate 99, 147–150, 167–168, and asparagine 196 each bind NAD(+); these read MR, WLHH, and EV. Residues tyrosine 225, arginine 248, 260–263, and tyrosine 338 contribute to the substrate site; that span reads YATH. Residue tyrosine 260 coordinates NAD(+).

The protein belongs to the Gfo/Idh/MocA family. Glycosyl hydrolase 109 subfamily. NAD(+) is required as a cofactor.

Its function is as follows. Glycosidase. The sequence is that of Glycosyl hydrolase family 109 protein 5 from Phocaeicola vulgatus (strain ATCC 8482 / DSM 1447 / JCM 5826 / CCUG 4940 / NBRC 14291 / NCTC 11154) (Bacteroides vulgatus).